The sequence spans 661 residues: MKLPTLGKCVVRTLMGAVALGAISVNAQTLSSNSTGTNNGFYYTFWKDSGDASMTLLSGGRYQSSWGNSTNNWVGGKGWNPGNNSRVISYSGSYGVDSSQNSYLALYGWTRSPLIEYYVIESYGSYNPASCSGGTDYGSFQSDGATYNVRRCQRVNQPSIDGTQTFYQYFSVRNPKKGFGNISGTITFANHVNFWASKGLNLGNHNYQVLATEGYQSRGSSDITVSEGTSGGGTSSVGGASSSVNSSTGGGSSGGITVRARGANGSEHINLRVGGAVVANWTLGTSFQNYLYSGNASGDIQVQFDNDASGRDVVVDYIIVNGETRQAEDMEHNSAVYANGRCGGGSYSENMHCNGEIGFGYTYDCFSGNCSGGNGGSNSSAGNSSSGNTGGGGSNCSGYVGITFDDGPNSNTATLVNLLRQNNLTPVTWFNQGNNVASNAHLMSQQLSVGEVHNHSYTHPHMTSWTYQQVYDELNRTNQAIQNAGAPKPTLFRPPYGELNSTIQQAAQALGLRVVTWDVDSQDWNGASAAAIANAANQLQNGQVILMHDGSYTNTNSAIAQIATNLRAKGLCPGRIDPNTGRAVAPSSSGGSSSVALSSSSRSSSSAGGNTGGNCQCNWWGTFYPLCQTQTSGWGWENSRSCISTSTCNSQGTGGGGVVCN.

The first 27 residues, Met-1 to Ala-27, serve as a signal peptide directing secretion. Residues Thr-29–Ser-226 form the GH11 domain. Glu-116 serves as the catalytic Nucleophile; for endoxylanase activity. Glu-213 (proton donor; for endoxylanase activity) is an active-site residue. Positions Ser-220–Arg-259 are disordered. Residues Val-237–Ser-247 show a composition bias toward low complexity. A polysaccharide deacetylase region spans residues Ser-394–Asp-577. Residues Gly-398–Gly-574 enclose the NodB homology domain. The disordered stretch occupies residues Pro-578–Asn-610. Low complexity predominate over residues Gly-581–Gly-608. The CBM10 domain occupies Gln-616–Thr-645.

It in the N-terminal section; belongs to the glycosyl hydrolase 11 (cellulase G) family.

It is found in the secreted. The enzyme catalyses Endohydrolysis of (1-&gt;4)-beta-D-xylosidic linkages in xylans.. The catalysed reaction is Deacetylation of xylans and xylo-oligosaccharides.. It functions in the pathway glycan degradation; xylan degradation. Functionally, endo-acting xylanase which specifically cleaves internal linkages on the xylan backbone, releasing xylooligosaccharides. Is able to hydrolyze oat spelt xylan and the arabinoxylans from wheat and rye, releasing xylobiose as the major product. Also likely catalyzes, via its C-terminal domain, the removal of acetyl groups from acetylated xylan. Thus, has the capability of hydrolyzing acetylated xylan. Does not attack mannan, galactan, arabinan or any cellulosic substrates. This chain is Bifunctional xylanase/xylan deacetylase (xyn11A), found in Cellvibrio japonicus (Pseudomonas fluorescens subsp. cellulosa).